Consider the following 227-residue polypeptide: Ribosomal RNA small subunit methyltransferase G (227 aa).

Residues Gly-74, Leu-79, 124 to 125 (AE), and Arg-142 each bind S-adenosyl-L-methionine.

The protein belongs to the methyltransferase superfamily. RNA methyltransferase RsmG family.

The protein localises to the cytoplasm. Specifically methylates the N7 position of guanine in position 518 of 16S rRNA. The polypeptide is Ribosomal RNA small subunit methyltransferase G (Mycolicibacterium gilvum (strain PYR-GCK) (Mycobacterium gilvum (strain PYR-GCK))).